We begin with the raw amino-acid sequence, 240 residues long: Methylthioribulose-1-phosphate dehydratase (240 aa).

Position 99 (Cys-99) interacts with substrate. Zn(2+)-binding residues include His-116 and His-118. Catalysis depends on Glu-145, which acts as the Proton donor/acceptor. Position 201 (His-201) interacts with Zn(2+).

This sequence belongs to the aldolase class II family. MtnB subfamily. Zn(2+) serves as cofactor.

It localises to the cytoplasm. It carries out the reaction 5-(methylsulfanyl)-D-ribulose 1-phosphate = 5-methylsulfanyl-2,3-dioxopentyl phosphate + H2O. It participates in amino-acid biosynthesis; L-methionine biosynthesis via salvage pathway; L-methionine from S-methyl-5-thio-alpha-D-ribose 1-phosphate: step 2/6. Its function is as follows. Catalyzes the dehydration of methylthioribulose-1-phosphate (MTRu-1-P) into 2,3-diketo-5-methylthiopentyl-1-phosphate (DK-MTP-1-P). In Paracoccidioides lutzii (strain ATCC MYA-826 / Pb01) (Paracoccidioides brasiliensis), this protein is Methylthioribulose-1-phosphate dehydratase.